Here is a 490-residue protein sequence, read N- to C-terminus: Probable cytosol aminopeptidase (490 aa).

2 residues coordinate Mn(2+): Lys-262 and Asp-267. Residue Lys-274 is part of the active site. Mn(2+)-binding residues include Asp-285, Asp-344, and Glu-346. Residue Arg-348 is part of the active site.

The protein belongs to the peptidase M17 family. The cofactor is Mn(2+).

Its subcellular location is the cytoplasm. It carries out the reaction Release of an N-terminal amino acid, Xaa-|-Yaa-, in which Xaa is preferably Leu, but may be other amino acids including Pro although not Arg or Lys, and Yaa may be Pro. Amino acid amides and methyl esters are also readily hydrolyzed, but rates on arylamides are exceedingly low.. The catalysed reaction is Release of an N-terminal amino acid, preferentially leucine, but not glutamic or aspartic acids.. Functionally, presumably involved in the processing and regular turnover of intracellular proteins. Catalyzes the removal of unsubstituted N-terminal amino acids from various peptides. This is Probable cytosol aminopeptidase from Mannheimia succiniciproducens (strain KCTC 0769BP / MBEL55E).